Here is a 150-residue protein sequence, read N- to C-terminus: Transcriptional repressor NrdR (150 aa).

Residues 3–34 (CPFCAFADSKVVDSRPDKEGSTIRRRRECESC) fold into a zinc finger. The ATP-cone domain maps to 49–139 (PLVIKKDGRR…VYRSFKDITE (91 aa)).

The protein belongs to the NrdR family. Zn(2+) is required as a cofactor.

In terms of biological role, negatively regulates transcription of bacterial ribonucleotide reductase nrd genes and operons by binding to NrdR-boxes. The sequence is that of Transcriptional repressor NrdR from Geotalea daltonii (strain DSM 22248 / JCM 15807 / FRC-32) (Geobacter daltonii).